The following is a 229-amino-acid chain: Large ribosomal subunit protein uL1 (229 aa).

Belongs to the universal ribosomal protein uL1 family. As to quaternary structure, part of the 50S ribosomal subunit.

In terms of biological role, binds directly to 23S rRNA. The L1 stalk is quite mobile in the ribosome, and is involved in E site tRNA release. Protein L1 is also a translational repressor protein, it controls the translation of the L11 operon by binding to its mRNA. In Ureaplasma urealyticum serovar 10 (strain ATCC 33699 / Western), this protein is Large ribosomal subunit protein uL1.